Consider the following 299-residue polypeptide: Probable alpha-L-glutamate ligase (299 aa).

The 183-residue stretch at 112–294 (LQLLTEQGIA…IALQMIVHIE (183 aa)) folds into the ATP-grasp domain. ATP is bound by residues lysine 148, 185-186 (DF), aspartate 194, and 218-220 (RAN). Aspartate 255, glutamate 267, and asparagine 269 together coordinate Mg(2+). Residues aspartate 255, glutamate 267, and asparagine 269 each contribute to the Mn(2+) site.

This sequence belongs to the RimK family. Mg(2+) is required as a cofactor. Requires Mn(2+) as cofactor.

This Histophilus somni (strain 129Pt) (Haemophilus somnus) protein is Probable alpha-L-glutamate ligase.